A 594-amino-acid polypeptide reads, in one-letter code: APOBEC1 complementation factor (594 aa).

3 RRM domains span residues 56-134 (CEIF…ASVD), 136-218 (CRLF…WAEP), and 231-303 (KILY…LAKP). The required for nuclear localization stretch occupies residues 360–409 (HFPATKGHLSNRAIIRAPSVREIYMNVPVGAAGVRGLGGRGYLAYTGLGR). The residue at position 499 (threonine 499) is a Phosphothreonine.

As to quaternary structure, part of the apolipoprotein B mRNA editing complex with APOBEC1. Interacts with TNPO2; TNPO2 may be responsible for transport of A1CF into the nucleus. Interacts with SYNCRIP. Interacts with CELF2/CUGBP2. Interacts with RBM47. As to expression, widely expressed with highest levels in brain, liver, pancreas, colon and spleen.

The protein localises to the nucleus. It is found in the endoplasmic reticulum. Its subcellular location is the cytoplasm. In terms of biological role, essential component of the apolipoprotein B mRNA editing enzyme complex which is responsible for the postranscriptional editing of a CAA codon for Gln to a UAA codon for stop in APOB mRNA. Binds to APOB mRNA and is probably responsible for docking the catalytic subunit, APOBEC1, to the mRNA to allow it to deaminate its target cytosine. The complex also protects the edited APOB mRNA from nonsense-mediated decay. The polypeptide is APOBEC1 complementation factor (A1CF) (Homo sapiens (Human)).